The following is a 119-amino-acid chain: Large ribosomal subunit protein uL18 (119 aa).

This sequence belongs to the universal ribosomal protein uL18 family. As to quaternary structure, part of the 50S ribosomal subunit; part of the 5S rRNA/L5/L18/L25 subcomplex. Contacts the 5S and 23S rRNAs.

Functionally, this is one of the proteins that bind and probably mediate the attachment of the 5S RNA into the large ribosomal subunit, where it forms part of the central protuberance. This Lactobacillus johnsonii (strain CNCM I-12250 / La1 / NCC 533) protein is Large ribosomal subunit protein uL18.